The primary structure comprises 354 residues: Protein CbrA (354 aa).

It belongs to the CbrA family.

This Escherichia coli (strain K12) protein is Protein CbrA (cbrA).